A 278-amino-acid polypeptide reads, in one-letter code: Diaminopimelate epimerase (278 aa).

Positions 11 and 63 each coordinate substrate. C72 acts as the Proton donor in catalysis. Substrate-binding positions include 73-74, N160, N193, and 211-212; these read GN and ER. Catalysis depends on C220, which acts as the Proton acceptor. 221–222 contributes to the substrate binding site; that stretch reads GT.

This sequence belongs to the diaminopimelate epimerase family. In terms of assembly, homodimer.

It is found in the cytoplasm. It carries out the reaction (2S,6S)-2,6-diaminopimelate = meso-2,6-diaminopimelate. It functions in the pathway amino-acid biosynthesis; L-lysine biosynthesis via DAP pathway; DL-2,6-diaminopimelate from LL-2,6-diaminopimelate: step 1/1. Its function is as follows. Catalyzes the stereoinversion of LL-2,6-diaminopimelate (L,L-DAP) to meso-diaminopimelate (meso-DAP), a precursor of L-lysine and an essential component of the bacterial peptidoglycan. This chain is Diaminopimelate epimerase, found in Desulforudis audaxviator (strain MP104C).